The primary structure comprises 1012 residues: Putative cellulose synthase-like protein D5 (1012 aa).

The tract at residues 1 to 85 (MSGDYANYTV…APSSNKSLLV (85 aa)) is disordered. A compositionally biased stretch (low complexity) spans 20-37 (PSGGAPPAAPSAGGARPG). Residues 57-69 (GGGDDGAKMDRRL) are compositionally biased toward basic and acidic residues. Transmembrane regions (helical) follow at residues 150-170 (ILSPYRLLVLVRFVALFLFLV) and 180-200 (ALWLWGISIVCEFWFAFSWLL). Asp-280 is an active-site residue. Residues 597–620 (PRQGSEAMPGAGGGRSGGGSVGGD) form a disordered region. The span at 606–618 (GAGGGRSGGGSVG) shows a compositional bias: gly residues. Asp-717 is an active-site residue. 6 helical membrane passes run 799 to 819 (LFLIMYCLLPALSLFSGQFIV), 825 to 845 (TFLSYLLLITITLMLLCLLEV), 871 to 891 (LAAVLQGLLKVVAGIEISFTL), 914 to 934 (SLFIPPLAVIGINIIALVVGV), 948 to 968 (LLGGGFFSFWVLAHYYPFAKG), and 978 to 998 (TIVYVWAGLISITVSLLWITI).

This sequence belongs to the glycosyltransferase 2 family. Plant cellulose synthase-like D subfamily.

It is found in the golgi apparatus membrane. Functionally, thought to be a Golgi-localized beta-glycan synthase that polymerize the backbones of noncellulosic polysaccharides (hemicelluloses) of plant cell wall. In Oryza sativa subsp. indica (Rice), this protein is Putative cellulose synthase-like protein D5 (CSLD5).